The chain runs to 263 residues: L-histidine 2-aminobutanoyltransferase (263 aa).

The protein belongs to the methyltransferase superfamily. CntL family.

The catalysed reaction is L-histidine + S-adenosyl-L-methionine = (2S)-2-amino-4-{[(1S)-1-carboxy-2-(1H-imidazol-4-yl)ethyl]amino}butanoate + S-methyl-5'-thioadenosine + H(+). Functionally, catalyzes the nucleophilic attack of one alpha-aminobutanoate moiety from SAM onto L-histidine to produce the intermediate (2S)-2-amino-4-{[(1S)-1-carboxy-2-(1H-imidazol-4-yl)ethyl]amino}butanoate. Functions in the biosynthesis of the metallophore pseudopaline, which is involved in the acquisition of nickel and zinc, and thus enables bacterial growth inside the host, where metal access is limited. Therefore, this enzyme probably contributes to Pseudomonas virulence. Appears to be specific for L-histidine as substrate. The protein is L-histidine 2-aminobutanoyltransferase of Pseudomonas aeruginosa (strain ATCC 15692 / DSM 22644 / CIP 104116 / JCM 14847 / LMG 12228 / 1C / PRS 101 / PAO1).